The following is a 254-amino-acid chain: MKIITCFKLVPEEQDIVVTPEYTLNFDNADAKISQFDLNAIEAASQLATDDDEIAALTVGGSLLQNSKVRKDVLSRGPHSLYLVQDAQLEHALPLDTAKALAAAIEKIGFDLLIFGEGSGDLYAQQVGLLVGEILQLPVINAVSAIQRQGNTLVIERTLEDDVEVIELSVPAVLCVTSDINVPRIPSMKAILGAGKKPVNQWQASDIDWSQSAPLAELVGIRVPPQTERKHIIIDNDSPEAIAELAEHLKKALN.

The protein belongs to the ETF beta-subunit/FixA family. YdiR and YdiQ form a heterodimer.

Functionally, may play a role in a redox process. The sequence is that of Putative electron transfer flavoprotein subunit YdiQ (ydiQ) from Escherichia coli (strain K12).